The primary structure comprises 141 residues: Plasmatocyte-spreading peptide (141 aa).

Residues 1–22 form the signal peptide; it reads MKLTINILFCLILISQYNSANG. The propeptide occupies 23–118; sequence NLRDLFNNVR…ATGGKDDKGR (96 aa). Residues 46-58 show a composition bias toward basic and acidic residues; it reads VKTLFHPSDKSGN. Positions 46–118 are disordered; that stretch reads VKTLFHPSDK…ATGGKDDKGR (73 aa). Residues 83-98 show a composition bias toward low complexity; that stretch reads PVAVTPAPVVSTTTQA. Residues 99-108 show a composition bias toward polar residues; that stretch reads SAPTVATNGT. A disulfide bond links Cys125 and Cys137.

The protein belongs to the GBP/PSP1/paralytic peptide family.

In terms of biological role, mediates the spreading of plasmatocytes to foreign surfaces. Plasmocytes are a class of hemocytes involved in insect cellular immunity. The polypeptide is Plasmatocyte-spreading peptide (PSP1) (Chrysodeixis includens (Soybean looper)).